A 415-amino-acid chain; its full sequence is Serine hydroxymethyltransferase (415 aa).

Residues leucine 122 and 126-128 contribute to the (6S)-5,6,7,8-tetrahydrofolate site; that span reads GHL. The residue at position 230 (lysine 230) is an N6-(pyridoxal phosphate)lysine.

Belongs to the SHMT family. In terms of assembly, homodimer. Requires pyridoxal 5'-phosphate as cofactor.

The protein localises to the cytoplasm. The catalysed reaction is (6R)-5,10-methylene-5,6,7,8-tetrahydrofolate + glycine + H2O = (6S)-5,6,7,8-tetrahydrofolate + L-serine. Its pathway is one-carbon metabolism; tetrahydrofolate interconversion. It functions in the pathway amino-acid biosynthesis; glycine biosynthesis; glycine from L-serine: step 1/1. Its function is as follows. Catalyzes the reversible interconversion of serine and glycine with tetrahydrofolate (THF) serving as the one-carbon carrier. This reaction serves as the major source of one-carbon groups required for the biosynthesis of purines, thymidylate, methionine, and other important biomolecules. Also exhibits THF-independent aldolase activity toward beta-hydroxyamino acids, producing glycine and aldehydes, via a retro-aldol mechanism. The protein is Serine hydroxymethyltransferase of Leptothrix cholodnii (strain ATCC 51168 / LMG 8142 / SP-6) (Leptothrix discophora (strain SP-6)).